Here is a 388-residue protein sequence, read N- to C-terminus: P2X receptor E (388 aa).

Over 1–28 the chain is Cytoplasmic; it reads MNFRNIDWDSLFSYSTIKIVRIRDKRLG. A helical transmembrane segment spans residues 29-49; the sequence is ILHFAFLIGIILYIIVGTIFL. Residues 50–312 are Lumenal-facing; the sequence is QKKYLVLESP…QLGQFDFQTM (263 aa). The pore-forming motif stretch occupies residues 291–304; it reads RHGVRIIFIQTGQL. The chain crosses the membrane as a helical span at residues 313-333; it reads LLTFVSGIGLVTAASLIVDII. The Cytoplasmic segment spans residues 334 to 388; it reads ATRIMPQRSRYQELKFQDSSINNTQKTPTNDHTPLLKDNEDTINENSYQNNSYEK. A disordered region spans residues 349-388; the sequence is FQDSSINNTQKTPTNDHTPLLKDNEDTINENSYQNNSYEK. Composition is skewed to polar residues over residues 350–365 and 377–388; these read QDSS…TNDH and NENSYQNNSYEK.

It belongs to the P2X receptor family.

It is found in the contractile vacuole membrane. In terms of biological role, P2X receptors are ATP-gated ion channels that play a role in intracellular calcium signaling. Not required for the purinergic response to extracellular nucleotides. Not essential for osmoregulation. Inward currents evoked by intracellular ATP. ATP analog beta, gamma-imido-ATP is a weak partial agonist of p2xE. Exclusively selective for ATP over other nucleotides. Insensitive to copper and P2 receptor antagonists PPADS and suramin but strongly inhibited by sodium ions. More permeable to ammonium than either sodium or potassium ions and less permeable to choline. Permeable to calcium ions, but not chloride. In Dictyostelium discoideum (Social amoeba), this protein is P2X receptor E (p2xE).